Reading from the N-terminus, the 337-residue chain is Transcription initiation factor IIB (337 aa).

A TFIIB-type zinc finger spans residues 37-68; that stretch reads EKAVCPECGSRNLVHDYERAELVCGDCGLVID. Residues C41, C44, C60, and C63 each contribute to the Zn(2+) site. Repeat copies occupy residues 154–237 and 248–329.

Belongs to the TFIIB family.

Stabilizes TBP binding to an archaeal box-A promoter. Also responsible for recruiting RNA polymerase II to the pre-initiation complex (DNA-TBP-TFIIB). This is Transcription initiation factor IIB from Methanosarcina mazei (Methanosarcina frisia).